The following is a 249-amino-acid chain: 2,3-bisphosphoglycerate-dependent phosphoglycerate mutase (249 aa).

Substrate is bound by residues arginine 8–asparagine 15, threonine 21–glycine 22, arginine 60, glutamate 87–tyrosine 90, lysine 98, arginine 114–arginine 115, and glycine 183–asparagine 184. Catalysis depends on histidine 9, which acts as the Tele-phosphohistidine intermediate. The active-site Proton donor/acceptor is glutamate 87.

This sequence belongs to the phosphoglycerate mutase family. BPG-dependent PGAM subfamily.

The catalysed reaction is (2R)-2-phosphoglycerate = (2R)-3-phosphoglycerate. The protein operates within carbohydrate degradation; glycolysis; pyruvate from D-glyceraldehyde 3-phosphate: step 3/5. Catalyzes the interconversion of 2-phosphoglycerate and 3-phosphoglycerate. This chain is 2,3-bisphosphoglycerate-dependent phosphoglycerate mutase, found in Pelodictyon phaeoclathratiforme (strain DSM 5477 / BU-1).